The following is a 245-amino-acid chain: Uridylate kinase (245 aa).

An ATP-binding site is contributed by 12–15 (KISG). Gly55 provides a ligand contact to UMP. Residues Gly56 and Arg60 each coordinate ATP. UMP contacts are provided by residues Asp76 and 137 to 144 (AGAPYLTT). Residues Thr164, Tyr171, and Asp174 each coordinate ATP.

This sequence belongs to the UMP kinase family. In terms of assembly, homohexamer.

It is found in the cytoplasm. It carries out the reaction UMP + ATP = UDP + ADP. Its pathway is pyrimidine metabolism; CTP biosynthesis via de novo pathway; UDP from UMP (UMPK route): step 1/1. Its activity is regulated as follows. Inhibited by UTP. In terms of biological role, catalyzes the reversible phosphorylation of UMP to UDP. In Chlamydia trachomatis serovar D (strain ATCC VR-885 / DSM 19411 / UW-3/Cx), this protein is Uridylate kinase.